The following is a 361-amino-acid chain: Glutaminyl-peptide cyclotransferase (361 aa).

An N-terminal signal peptide occupies residues 1-28; it reads MAGGRHRRVVGTLHLLLLVAALPWASRG. An N-linked (GlcNAc...) asparagine glycan is attached at asparagine 49. Cysteine 139 and cysteine 164 form a disulfide bridge. Aspartate 159 provides a ligand contact to Zn(2+). Glutamate 201 acts as the Proton acceptor in catalysis. Glutamate 202 is a Zn(2+) binding site. Aspartate 248 acts as the Proton acceptor in catalysis. Asparagine 296 is a glycosylation site (N-linked (GlcNAc...) asparagine). Histidine 330 lines the Zn(2+) pocket.

It belongs to the glutaminyl-peptide cyclotransferase family.

Its subcellular location is the secreted. It carries out the reaction N-terminal L-glutaminyl-[peptide] = N-terminal 5-oxo-L-prolyl-[peptide] + NH4(+). Responsible for the biosynthesis of pyroglutamyl peptides. Has a bias against acidic and tryptophan residues adjacent to the N-terminal glutaminyl residue and a lack of importance of chain length after the second residue. Also catalyzes N-terminal pyroglutamate formation. In vitro, catalyzes pyroglutamate formation of N-terminally truncated form of APP amyloid-beta peptides [Glu-3]-amyloid-beta. May be involved in the N-terminal pyroglutamate formation of several amyloid-related plaque-forming peptides. This chain is Glutaminyl-peptide cyclotransferase (QPCT), found in Homo sapiens (Human).